The following is a 485-amino-acid chain: Elongation factor TuB, chloroplastic (485 aa).

The transit peptide at Met1–Arg76 directs the protein to the chloroplast. The tr-type G domain maps to Lys86–Gln290. A G1 region spans residues Gly95 to Thr102. A GTP-binding site is contributed by Gly95–Thr102. The G2 stretch occupies residues Gly136–Asn140. The interval Asp157 to Gly160 is G3. Residues Asp157–His161 and Asn212–Asp215 contribute to the GTP site. Positions Asn212–Asp215 are G4. A G5 region spans residues Ser250–Leu252.

It belongs to the TRAFAC class translation factor GTPase superfamily. Classic translation factor GTPase family. EF-Tu/EF-1A subfamily.

Its subcellular location is the plastid. The protein localises to the chloroplast. Its function is as follows. This protein promotes the GTP-dependent binding of aminoacyl-tRNA to the A-site of ribosomes during protein biosynthesis. This chain is Elongation factor TuB, chloroplastic (TUFB), found in Nicotiana sylvestris (Wood tobacco).